The sequence spans 350 residues: LysM domain-containing GPI-anchored protein 2 (350 aa).

The first 23 residues, 1–23 (METSCFTLLGLLVSLSFFLTLSA), serve as a signal peptide directing secretion. Residues Asn-30, Asn-48, Asn-76, and Asn-99 are each glycosylated (N-linked (GlcNAc...) asparagine). Intrachain disulfides connect Cys-31/Cys-97, Cys-38/Cys-161, Cys-95/Cys-159, and Cys-97/Cys-161. LysM domains lie at 108-155 (IEYT…KFWI) and 172-216 (YAHV…PLDV). Chitin contacts are provided by residues 114–120 (KDDILSF) and 142–149 (PDPNKIEI). N-linked (GlcNAc...) asparagine glycans are attached at residues Asn-193, Asn-238, Asn-258, Asn-289, and Asn-305. 2 disulfide bridges follow: Cys-221–Cys-253 and Cys-248–Cys-277. Residue Asp-318 is the site of GPI-anchor amidated aspartate attachment. The propeptide at 319 to 350 (SAGPDNYASTLSSSFNFVIVLIQCALLCLCLL) is removed in mature form.

In terms of assembly, forms homooligomers. Interacts with CERK1. Binds to chitin oligosaccharide elicitor.

The protein localises to the cell membrane. Functionally, chitin elicitor-binding protein involved in the perception of chitin oligosaccharide elicitor. This is LysM domain-containing GPI-anchored protein 2 (LYM2) from Arabidopsis thaliana (Mouse-ear cress).